The primary structure comprises 487 residues: UDP-N-acetylmuramoyl-L-alanyl-D-glutamate--2,6-diaminopimelate ligase (487 aa).

UDP-N-acetyl-alpha-D-muramoyl-L-alanyl-D-glutamate-binding residues include Leu-23 and Ser-25. 108 to 114 (GTNGKTS) is an ATP binding site. Residues 150 to 151 (TT), Ser-177, Gln-183, and Arg-185 each bind UDP-N-acetyl-alpha-D-muramoyl-L-alanyl-D-glutamate. The residue at position 217 (Lys-217) is an N6-carboxylysine. Residues Arg-378, 402–405 (DNPR), Gly-453, and Glu-457 each bind meso-2,6-diaminopimelate. The short motif at 402-405 (DNPR) is the Meso-diaminopimelate recognition motif element.

Belongs to the MurCDEF family. MurE subfamily. The cofactor is Mg(2+). Carboxylation is probably crucial for Mg(2+) binding and, consequently, for the gamma-phosphate positioning of ATP.

It is found in the cytoplasm. It catalyses the reaction UDP-N-acetyl-alpha-D-muramoyl-L-alanyl-D-glutamate + meso-2,6-diaminopimelate + ATP = UDP-N-acetyl-alpha-D-muramoyl-L-alanyl-gamma-D-glutamyl-meso-2,6-diaminopimelate + ADP + phosphate + H(+). It functions in the pathway cell wall biogenesis; peptidoglycan biosynthesis. In terms of biological role, catalyzes the addition of meso-diaminopimelic acid to the nucleotide precursor UDP-N-acetylmuramoyl-L-alanyl-D-glutamate (UMAG) in the biosynthesis of bacterial cell-wall peptidoglycan. The polypeptide is UDP-N-acetylmuramoyl-L-alanyl-D-glutamate--2,6-diaminopimelate ligase (Pseudomonas syringae pv. tomato (strain ATCC BAA-871 / DC3000)).